The following is a 1091-amino-acid chain: Methionine S-methyltransferase (1091 aa).

This sequence belongs to the class I-like SAM-binding methyltransferase superfamily. As to quaternary structure, homotetramer.

The protein resides in the cytoplasm. The catalysed reaction is L-methionine + S-adenosyl-L-methionine = S-methyl-L-methionine + S-adenosyl-L-homocysteine. Its function is as follows. Catalyzes the S-methylmethionine (SMM) biosynthesis from adenosyl-L-homocysteine (AdoMet) and methionine. SMM biosynthesis (by MMT1) and degradation (by HMT-1, HMT-2 and HMT-3) constitute the SMM cycle in plants, which is probably required to achieve short term control of AdoMet level. Also able to catalyze the selenium-methylmethionine (SeMM) from AdoMet and selenium-methionine (SeMet). May play a role in phoem sulfur transport; such function is however not essential. This Zea mays (Maize) protein is Methionine S-methyltransferase (MMT1).